The primary structure comprises 245 residues: tRNA1(Val) (adenine(37)-N6)-methyltransferase (245 aa).

Belongs to the methyltransferase superfamily. tRNA (adenine-N(6)-)-methyltransferase family.

It is found in the cytoplasm. The enzyme catalyses adenosine(37) in tRNA1(Val) + S-adenosyl-L-methionine = N(6)-methyladenosine(37) in tRNA1(Val) + S-adenosyl-L-homocysteine + H(+). In terms of biological role, specifically methylates the adenine in position 37 of tRNA(1)(Val) (anticodon cmo5UAC). The polypeptide is tRNA1(Val) (adenine(37)-N6)-methyltransferase (Salmonella paratyphi C (strain RKS4594)).